The primary structure comprises 317 residues: Transaldolase (317 aa).

Lys126 (schiff-base intermediate with substrate) is an active-site residue.

This sequence belongs to the transaldolase family. Type 1 subfamily. Homodimer.

It localises to the cytoplasm. It carries out the reaction D-sedoheptulose 7-phosphate + D-glyceraldehyde 3-phosphate = D-erythrose 4-phosphate + beta-D-fructose 6-phosphate. It functions in the pathway carbohydrate degradation; pentose phosphate pathway; D-glyceraldehyde 3-phosphate and beta-D-fructose 6-phosphate from D-ribose 5-phosphate and D-xylulose 5-phosphate (non-oxidative stage): step 2/3. Transaldolase is important for the balance of metabolites in the pentose-phosphate pathway. The polypeptide is Transaldolase (Burkholderia multivorans (strain ATCC 17616 / 249)).